Here is a 358-residue protein sequence, read N- to C-terminus: 3-dehydroquinate synthase (358 aa).

NAD(+) contacts are provided by residues 70-75 (DGEQYK), 104-108 (GVIGD), 128-129 (TT), K141, K150, and 168-171 (CLST). 3 residues coordinate Zn(2+): E183, H246, and H263.

It belongs to the sugar phosphate cyclases superfamily. Dehydroquinate synthase family. Requires Co(2+) as cofactor. Zn(2+) is required as a cofactor. The cofactor is NAD(+).

Its subcellular location is the cytoplasm. It carries out the reaction 7-phospho-2-dehydro-3-deoxy-D-arabino-heptonate = 3-dehydroquinate + phosphate. It participates in metabolic intermediate biosynthesis; chorismate biosynthesis; chorismate from D-erythrose 4-phosphate and phosphoenolpyruvate: step 2/7. Functionally, catalyzes the conversion of 3-deoxy-D-arabino-heptulosonate 7-phosphate (DAHP) to dehydroquinate (DHQ). This is 3-dehydroquinate synthase from Shewanella woodyi (strain ATCC 51908 / MS32).